Consider the following 57-residue polypeptide: SEVKMDAEFRHDSGYEVHHQKLVFFAEDVGSNKGAIIGLMVGGVVIATVIVITLVML.

The Extracellular portion of the chain corresponds to 1–33; sequence SEVKMDAEFRHDSGYEVHHQKLVFFAEDVGSNK. Residues His-11, Tyr-15, His-18, and His-19 each contribute to the Cu(2+) site. Positions 11, 15, 18, and 19 each coordinate Zn(2+). Residues 34-57 form a helical membrane-spanning segment; the sequence is GAIIGLMVGGVVIATVIVITLVML.

The protein belongs to the APP family. Binds, via its C-terminus, to the PID domain of several cytoplasmic proteins, including APBB family members, the APBA family, MAPK8IP1, SHC1 and NUMB and DAB1. Binding to DAB1 inhibits its serine phosphorylation. Interacts (via NPXY motif) with DAB2 (via PID domain); the interaction is impaired by tyrosine phosphorylation of the NPXY motif. Also interacts with GPCR-like protein BPP, APPBP1, IB1, KNS2 (via its TPR domains), APPBP2 (via BaSS) and DDB1. In vitro, it binds MAPT via the MT-binding domains. Associates with microtubules in the presence of ATP and in a kinesin-dependent manner. Interacts, through a C-terminal domain, with GNAO1. Interacts with CPEB1, ANKS1B, TNFRSF21 and AGER. Interacts with ITM2B. Interacts with ITM2C. Interacts with IDE. Can form homodimers; dimerization is enhanced in the presence of Cu(2+) ions. Can form homodimers; this is promoted by heparin binding. Interacts with SORL1 (via N-terminal ectodomain); this interaction retains APP in the trans-Golgi network and reduces processing into soluble APP-alpha and amyloid-beta peptides. Interacts with PLD3. Interacts with VDAC1. Interacts with NSG1; could regulate APP processing. Amyloid-beta protein 42 interacts with FPR2. Interacts with LRRK2. Interacts (via cytoplasmic domain) with KIF5B. Interacts (via C-terminus) with APBB2/FE65L1 (via C-terminus). Interacts (via intracellular domain) with APBB3. Proteolytically processed under normal cellular conditions. Cleavage either by alpha-secretase, beta-secretase or theta-secretase leads to generation and extracellular release of soluble APP peptides, S-APP-alpha and S-APP-beta, and the retention of corresponding membrane-anchored C-terminal fragments, C80, C83 and C99. Subsequent processing of C80 and C83 by gamma-secretase yields P3 peptides. This is the major secretory pathway and is non-amyloidogenic. Alternatively, presenilin/nicastrin-mediated gamma-secretase processing of C99 releases the amyloid-beta proteins, amyloid-beta protein 40 and amyloid-beta protein 42, major components of amyloid plaques, and the cytotoxic C-terminal fragments, gamma-CTF(50), gamma-CTF(57) and gamma-CTF(59). PSEN1 cleavage is more efficient with C83 than with C99 as substrate (in vitro). Amyloid-beta protein 40 and Amyloid-beta protein 42 are cleaved by ACE. Many other minor amyloid-beta peptides, amyloid-beta 1-X peptides, are found in cerebral spinal fluid (CSF) including the amyloid-beta X-15 peptides, produced from the cleavage by alpha-secretase.

The protein localises to the cell membrane. It is found in the membrane. The protein resides in the perikaryon. It localises to the cell projection. Its subcellular location is the growth cone. The protein localises to the clathrin-coated pit. It is found in the early endosome. The protein resides in the cytoplasmic vesicle. It localises to the secreted. Its subcellular location is the cell surface. The protein localises to the nucleus. It is found in the cytoplasm. Its function is as follows. Functions as a cell surface receptor and performs physiological functions on the surface of neurons relevant to neurite growth, neuronal adhesion and axonogenesis. Interaction between APP molecules on neighboring cells promotes synaptogenesis. Involved in cell mobility and transcription regulation through protein-protein interactions. Can promote transcription activation through binding to APBB1-KAT5 and inhibit Notch signaling through interaction with Numb. Couples to apoptosis-inducing pathways such as those mediated by G(o) and JIP. Inhibits G(o)-alpha ATPase activity. Acts as a kinesin I membrane receptor, mediating the axonal transport of beta-secretase and presenilin 1. By acting as a kinesin I membrane receptor, plays a role in axonal anterograde transport of cargo towards synapses in axons. May be involved in copper homeostasis/oxidative stress through copper ion reduction. In vitro, copper-metallated APP induces neuronal death directly or is potentiated through Cu(2+)-mediated low-density lipoprotein oxidation. Can regulate neurite outgrowth through binding to components of the extracellular matrix such as heparin and collagen I and IV. Induces a AGER-dependent pathway that involves activation of p38 MAPK, resulting in internalization of amyloid-beta peptide and mitochondrial dysfunction in cultured cortical neurons. Provides Cu(2+) ions for GPC1 which are required for release of nitric oxide (NO) and subsequent degradation of the heparan sulfate chains on GPC1. In Ursus maritimus (Polar bear), this protein is Amyloid-beta precursor protein (APP).